Here is a 2925-residue protein sequence, read N- to C-terminus: Serine/threonine-protein kinase tel1 (2925 aa).

The disordered stretch occupies residues glutamate 172–proline 211. A compositionally biased stretch (basic and acidic residues) spans aspartate 174 to leucine 186. Residues threonine 195–threonine 204 are compositionally biased toward polar residues. The region spanning glutamate 1844 to serine 2467 is the FAT domain. Positions tyrosine 2571 to arginine 2882 constitute a PI3K/PI4K catalytic domain. A G-loop region spans residues isoleucine 2577–alanine 2583. The segment at glycine 2749–asparagine 2757 is catalytic loop. Residues histidine 2769 to threonine 2793 form an activation loop region. Positions glutamine 2853–glutamate 2879 are disordered. An FATC domain is found at lysine 2893–alanine 2925.

The protein belongs to the PI3/PI4-kinase family. ATM subfamily. In terms of assembly, associates with DNA double-strand breaks.

The protein resides in the nucleus. Its subcellular location is the chromosome. It localises to the telomere. The enzyme catalyses L-seryl-[protein] + ATP = O-phospho-L-seryl-[protein] + ADP + H(+). It carries out the reaction L-threonyl-[protein] + ATP = O-phospho-L-threonyl-[protein] + ADP + H(+). Functionally, serine/threonine protein kinase which activates checkpoint signaling upon genotoxic stresses such as ionizing radiation (IR), ultraviolet light (UV), or DNA replication stalling, thereby acting as a DNA damage sensor. Recognizes the substrate consensus sequence [ST]-Q. Phosphorylates histone H2A to form H2AS128ph (gamma-H2A) at sites of DNA damage, involved in the regulation of DNA damage response mechanism. Required for the control of telomere length and genome stability. This is Serine/threonine-protein kinase tel1 (tel1) from Aspergillus oryzae (strain ATCC 42149 / RIB 40) (Yellow koji mold).